The following is a 561-amino-acid chain: Oligo-1,6-glucosidase (561 aa).

The active-site Nucleophile is D199. Catalysis depends on E256, which acts as the Proton donor.

This sequence belongs to the glycosyl hydrolase 13 family.

It is found in the cytoplasm. It carries out the reaction Hydrolysis of (1-&gt;6)-alpha-D-glucosidic linkages in some oligosaccharides produced from starch and glycogen by alpha-amylase, and in isomaltose.. In Halalkalibacterium halodurans (strain ATCC BAA-125 / DSM 18197 / FERM 7344 / JCM 9153 / C-125) (Bacillus halodurans), this protein is Oligo-1,6-glucosidase (malL).